The chain runs to 433 residues: Enolase (433 aa).

Residue Q167 participates in (2R)-2-phosphoglycerate binding. E209 acts as the Proton donor in catalysis. Mg(2+) contacts are provided by D246, E291, and D318. Residue K326 is modified to N6-acetyllysine. Residues K343, R372, S373, and K394 each contribute to the (2R)-2-phosphoglycerate site. Residue K343 is the Proton acceptor of the active site. At K343 the chain carries N6-(2-hydroxyisobutyryl)lysine.

Belongs to the enolase family. Component of the RNA degradosome, a multiprotein complex involved in RNA processing and mRNA degradation. Mg(2+) serves as cofactor. In terms of processing, acetylated and 2-hydroxyisobutyrylated at Lys-326 and Lys-343, respectively, reducing the enolase activity. Deacetylated and de-2-hydroxyisobutyrylated by NpdA/CobB, increasing the enolase activity.

Its subcellular location is the cytoplasm. It is found in the secreted. The protein resides in the cell surface. The enzyme catalyses (2R)-2-phosphoglycerate = phosphoenolpyruvate + H2O. The protein operates within carbohydrate degradation; glycolysis; pyruvate from D-glyceraldehyde 3-phosphate: step 4/5. Functionally, catalyzes the reversible conversion of 2-phosphoglycerate (2-PG) into phosphoenolpyruvate (PEP). It is essential for the degradation of carbohydrates via glycolysis. The protein is Enolase of Proteus mirabilis (strain HI4320).